A 64-amino-acid polypeptide reads, in one-letter code: DNA gyrase inhibitor YacG (64 aa).

Residues cysteine 9, cysteine 12, cysteine 28, and cysteine 32 each coordinate Zn(2+). The interval 45 to 64 (KRIPSSGDLSESDDWSEEPK) is disordered. Positions 54–64 (SESDDWSEEPK) are enriched in acidic residues.

Belongs to the DNA gyrase inhibitor YacG family. As to quaternary structure, interacts with GyrB. The cofactor is Zn(2+).

In terms of biological role, inhibits all the catalytic activities of DNA gyrase by preventing its interaction with DNA. Acts by binding directly to the C-terminal domain of GyrB, which probably disrupts DNA binding by the gyrase. The polypeptide is DNA gyrase inhibitor YacG (Escherichia fergusonii (strain ATCC 35469 / DSM 13698 / CCUG 18766 / IAM 14443 / JCM 21226 / LMG 7866 / NBRC 102419 / NCTC 12128 / CDC 0568-73)).